Reading from the N-terminus, the 171-residue chain is Disulfide bond formation protein B (171 aa).

Residues 1–13 (MTFISNLADTRLA) lie on the Cytoplasmic side of the membrane. Residues 14–30 (WGLLFLSALVLVAYALF) form a helical membrane-spanning segment. The Periplasmic portion of the chain corresponds to 31–48 (SQHAMGLQPCIMCIYQRT). A disulfide bond links cysteine 40 and cysteine 43. A helical membrane pass occupies residues 49–63 (AIFGIMFACVPVLAA). Residues 64-70 (NNMLTRL) lie on the Cytoplasmic side of the membrane. The chain crosses the membrane as a helical span at residues 71–88 (FAFTVWGISAIWGGLIAW). The Periplasmic portion of the chain corresponds to 89–144 (EHYDIQNAANPFFATCEIVPNFPSWLPLHEWLPNLFAATGDCGNIDWVFMDMSMPQ). Cysteine 104 and cysteine 130 form a disulfide bridge. Residues 145–163 (WMMVVFAIYSSIWFVVLAS) traverse the membrane as a helical segment. Topologically, residues 164–171 (RLIGNRAI) are cytoplasmic.

Belongs to the DsbB family.

It localises to the cell inner membrane. Its function is as follows. Required for disulfide bond formation in some periplasmic proteins. Acts by oxidizing the DsbA protein. This is Disulfide bond formation protein B from Pseudoalteromonas atlantica (strain T6c / ATCC BAA-1087).